Reading from the N-terminus, the 246-residue chain is 3-deoxy-manno-octulosonate cytidylyltransferase (246 aa).

This sequence belongs to the KdsB family.

It is found in the cytoplasm. It carries out the reaction 3-deoxy-alpha-D-manno-oct-2-ulosonate + CTP = CMP-3-deoxy-beta-D-manno-octulosonate + diphosphate. Its pathway is nucleotide-sugar biosynthesis; CMP-3-deoxy-D-manno-octulosonate biosynthesis; CMP-3-deoxy-D-manno-octulosonate from 3-deoxy-D-manno-octulosonate and CTP: step 1/1. The protein operates within bacterial outer membrane biogenesis; lipopolysaccharide biosynthesis. Its function is as follows. Activates KDO (a required 8-carbon sugar) for incorporation into bacterial lipopolysaccharide in Gram-negative bacteria. The sequence is that of 3-deoxy-manno-octulosonate cytidylyltransferase from Rickettsia africae (strain ESF-5).